A 129-amino-acid polypeptide reads, in one-letter code: Small ribosomal subunit protein uS12 (129 aa).

Residue D89 is modified to 3-methylthioaspartic acid. The interval 110-129 (RKQGRSRYGAPRKQVVATKK) is disordered.

This sequence belongs to the universal ribosomal protein uS12 family. In terms of assembly, part of the 30S ribosomal subunit. Contacts proteins S8 and S17. May interact with IF1 in the 30S initiation complex.

In terms of biological role, with S4 and S5 plays an important role in translational accuracy. Functionally, interacts with and stabilizes bases of the 16S rRNA that are involved in tRNA selection in the A site and with the mRNA backbone. Located at the interface of the 30S and 50S subunits, it traverses the body of the 30S subunit contacting proteins on the other side and probably holding the rRNA structure together. The combined cluster of proteins S8, S12 and S17 appears to hold together the shoulder and platform of the 30S subunit. The polypeptide is Small ribosomal subunit protein uS12 (Rickettsia bellii (strain RML369-C)).